Reading from the N-terminus, the 435-residue chain is Nuclear hormone receptor family member nhr-14 (435 aa).

Residues 17–92 constitute a DNA-binding region (nuclear receptor); it reads ADFCVVCGDK…DGMKPEAIQN (76 aa). NR C4-type zinc fingers lie at residues 20–40 and 56–80; these read CVVC…CNGC and CRFN…FQKC. The tract at residues 91-126 is disordered; it reads QNERDRIGSTKRRKRSGANSENNSDSEGTPSPKIEV. Residues 107–119 are compositionally biased toward polar residues; that stretch reads GANSENNSDSEGT. One can recognise an NR LBD domain in the interval 131–355; it reads VSRKLIEMLL…KRDTISPKIE (225 aa).

Belongs to the nuclear hormone receptor family. As to expression, expressed in intestine and head neurons in young adults.

It is found in the nucleus. Orphan nuclear receptor. Transcriptional repressor of intestinal metal transporter smf-3 and genes of the innate immune response. Inhibits nuclear localization of transcription factor pqm-1; in response to pathogen stress, may facilitate translocation of pqm-1, leading to transcriptional activation of genes involved in innate immunity and iron uptake. The polypeptide is Nuclear hormone receptor family member nhr-14 (nhr-14) (Caenorhabditis elegans).